We begin with the raw amino-acid sequence, 526 residues long: Cytochrome P450 monooxygenase patI (526 aa).

The Cytoplasmic portion of the chain corresponds to 1–6 (MDILQL). Residues 7 to 29 (APTHLLAILLSSTSALFLITYLL) form a helical membrane-spanning segment. The Lumenal segment spans residues 30–526 (RAGHRPSDLP…EAQEVFARFD (497 aa)). Asn81 carries an N-linked (GlcNAc...) asparagine glycan. Residue Cys446 coordinates heme.

The protein belongs to the cytochrome P450 family. Heme is required as a cofactor.

It is found in the endoplasmic reticulum membrane. The catalysed reaction is 3-hydroxybenzyl alcohol + reduced [NADPH--hemoprotein reductase] + O2 = gentisyl alcohol + oxidized [NADPH--hemoprotein reductase] + H2O + H(+). It participates in mycotoxin biosynthesis; patulin biosynthesis. Its function is as follows. Cytochrome P450 monooxygenase; part of the gene cluster that mediates the biosynthesis of patulin, an acetate-derived tetraketide mycotoxin produced by several fungal species that shows antimicrobial properties against several bacteria. PatI catalyzes the conversion of m-hydroxybenzyl alcohol into gentisyl alcohol. The pathway begins with the synthesis of 6-methylsalicylic acid by the polyketide synthase (PKS) patK via condensation of acetate and malonate units. The 6-methylsalicylic acid decarboxylase patG then catalyzes the decarboxylation of 6-methylsalicylic acid to yield m-cresol (also known as 3-methylphenol). These first reactions occur in the cytosol. The intermediate m-cresol is then transported into the endoplasmic reticulum where the cytochrome P450 monooxygenase patH converts it to m-hydroxybenzyl alcohol, which is further converted to gentisyl alcohol by the cytochrome P450 monooxygenase patI. The oxidoreductases patJ and patO further convert gentisyl alcohol to isoepoxydon in the vacuole. PatN catalyzes then the transformation of isoepoxydon into phyllostine. The cluster protein patF is responsible for the conversion from phyllostine to neopatulin whereas the alcohol dehydrogenase patD converts neopatulin to E-ascladiol. The steps between isoepoxydon and E-ascladiol occur in the cytosol, and E-ascladiol is probably secreted to the extracellular space by one of the cluster-specific transporters patC or patM. Finally, the secreted patulin synthase patE catalyzes the conversion of E-ascladiol to patulin. The chain is Cytochrome P450 monooxygenase patI from Penicillium expansum (Blue mold rot fungus).